Reading from the N-terminus, the 883-residue chain is uncharacterized protein (883 aa).

The interval 258-373 is disordered; that stretch reads INNQSDNQSN…NQFNKPDNEP (116 aa). Low complexity-rich tracts occupy residues 259–268, 277–317, and 324–333; these read NNQSDNQSNS, EPNG…SNSE, and NEPNTEPNTE. The span at 334 to 347 shows a compositional bias: polar residues; that stretch reads SNGQSNSELNNQSD. Residues 348 to 368 are compositionally biased toward low complexity; the sequence is NHPNNEPNSEPNNEPNNQFNK.

Belongs to the mimivirus L137 family.

This is an uncharacterized protein from Acanthamoeba polyphaga mimivirus (APMV).